Reading from the N-terminus, the 412-residue chain is Multifunctional CCA protein (412 aa).

Positions 8 and 11 each coordinate ATP. Residues G8 and R11 each contribute to the CTP site. Positions 21 and 23 each coordinate Mg(2+). Positions 91, 138, and 141 each coordinate ATP. 3 residues coordinate CTP: R91, R138, and R141. The HD domain occupies 229-334; the sequence is RGQHTLLALQ…LELFNQLDVW (106 aa).

Belongs to the tRNA nucleotidyltransferase/poly(A) polymerase family. Bacterial CCA-adding enzyme type 1 subfamily. Monomer. Can also form homodimers and oligomers. Requires Mg(2+) as cofactor. It depends on Ni(2+) as a cofactor.

It carries out the reaction a tRNA precursor + 2 CTP + ATP = a tRNA with a 3' CCA end + 3 diphosphate. It catalyses the reaction a tRNA with a 3' CCA end + 2 CTP + ATP = a tRNA with a 3' CCACCA end + 3 diphosphate. Its function is as follows. Catalyzes the addition and repair of the essential 3'-terminal CCA sequence in tRNAs without using a nucleic acid template. Adds these three nucleotides in the order of C, C, and A to the tRNA nucleotide-73, using CTP and ATP as substrates and producing inorganic pyrophosphate. tRNA 3'-terminal CCA addition is required both for tRNA processing and repair. Also involved in tRNA surveillance by mediating tandem CCA addition to generate a CCACCA at the 3' terminus of unstable tRNAs. While stable tRNAs receive only 3'-terminal CCA, unstable tRNAs are marked with CCACCA and rapidly degraded. This Haemophilus ducreyi (strain 35000HP / ATCC 700724) protein is Multifunctional CCA protein.